The primary structure comprises 316 residues: Ribose-phosphate pyrophosphokinase (316 aa).

ATP is bound by residues 41-43 (DGE) and 100-101 (RQ). Residues His134 and Asp174 each coordinate Mg(2+). Residue Lys197 is part of the active site. Residues Arg199, Asp223, and 227–231 (DTAGT) each bind D-ribose 5-phosphate.

It belongs to the ribose-phosphate pyrophosphokinase family. Class I subfamily. In terms of assembly, homohexamer. Mg(2+) serves as cofactor.

It localises to the cytoplasm. It catalyses the reaction D-ribose 5-phosphate + ATP = 5-phospho-alpha-D-ribose 1-diphosphate + AMP + H(+). The protein operates within metabolic intermediate biosynthesis; 5-phospho-alpha-D-ribose 1-diphosphate biosynthesis; 5-phospho-alpha-D-ribose 1-diphosphate from D-ribose 5-phosphate (route I): step 1/1. Functionally, involved in the biosynthesis of the central metabolite phospho-alpha-D-ribosyl-1-pyrophosphate (PRPP) via the transfer of pyrophosphoryl group from ATP to 1-hydroxyl of ribose-5-phosphate (Rib-5-P). The protein is Ribose-phosphate pyrophosphokinase of Caldanaerobacter subterraneus subsp. tengcongensis (strain DSM 15242 / JCM 11007 / NBRC 100824 / MB4) (Thermoanaerobacter tengcongensis).